A 657-amino-acid polypeptide reads, in one-letter code: Probable intron-encoded endonuclease aI2 (657 aa).

The interval 1–245 is COX1 exons 1 to 2 encoded; it reads MKQMSYVTRW…TYEHLFWFFG (245 aa). A run of 6 helical transmembrane segments spans residues 19 to 39, 69 to 89, 103 to 123, 152 to 172, 188 to 208, and 269 to 289; these read IGMT…GMSV, LLMM…NFFL, LNNI…CSVL, AMFA…NFMV, PLFA…LPVL, and MYFI…ANMV. A COX1 intron 2 encoded region spans residues 246 to 657; the sequence is QWWPTNYVNN…KFENKWNKKF (412 aa).

It in the C-terminal section; belongs to the LAGLIDADG endonuclease family. The protein in the N-terminal section; belongs to the heme-copper respiratory oxidase family. The mature protein may arise from proteolytic cleavage of an in-frame translation of COX1 exons 1 and 2 plus intron 2, containing the aI2 open reading frame.

It is found in the mitochondrion. Its subcellular location is the membrane. Mitochondrial DNA endonuclease involved in intron homing. The sequence is that of Probable intron-encoded endonuclease aI2 (aI2) from Debaryomyces hansenii (strain ATCC 36239 / CBS 767 / BCRC 21394 / JCM 1990 / NBRC 0083 / IGC 2968) (Yeast).